Here is a 379-residue protein sequence, read N- to C-terminus: ATP-sensitive inward rectifier potassium channel 10 (379 aa).

At Met-1–Asp-61 the chain is on the cytoplasmic side. Arg-36 is a 1,2-dioctanoyl-sn-glycero-3-phospho-(1D-myo-inositol-4,5-bisphosphate) binding site. The helical transmembrane segment at Met-62–Leu-88 threads the bilayer. Residues Val-89–Thr-114 are Extracellular-facing. A disulfide bond links Cys-108 and Cys-140. An intramembrane region (discontinuously helical; Pore-forming) is located at residues Leu-115–Tyr-131. Positions Thr-128–Phe-133 match the Selectivity filter motif. Topologically, residues Gly-132–Cys-140 are extracellular. The helical transmembrane segment at Pro-141–Leu-166 threads the bilayer. At Ala-167–Val-379 the chain is on the cytoplasmic side. 3 residues coordinate 1,2-dioctanoyl-sn-glycero-3-phospho-(1D-myo-inositol-4,5-bisphosphate): Lys-168, Arg-171, and Lys-173. Gly-210–Leu-217 lines the ATP pocket.

It belongs to the inward rectifier-type potassium channel (TC 1.A.2.1) family. KCNJ10 subfamily. Homotetramer. In kidney cells, it forms heteromeric channels with Kir5.1/KCNJ16; this interaction is required for KCNJ16 localization to the basolateral membrane. Interacts with MAGI1, alone and possibly as a heteromer with KCNJ16; this interaction may facilitate KCNJ10/KCNJ16 potassium channel expression at the basolateral membrane in kidney cells. Interacts with PATJ. As to expression, expressed in kidney (at protein level). In the nephron, expressed in the distal convoluted tubule, the connecting tubule, the collecting duct and cortical thick ascending limbs.

Its subcellular location is the membrane. The protein localises to the basolateral cell membrane. The enzyme catalyses K(+)(in) = K(+)(out). Channel activity is strongly regulated by variations of cytosolic pH; channels are activated by alkaline and inhibited by acidic pH values. Inhibited by Ba(2+) and Cs(+). Activated by phosphatidylinositol 4,5 biphosphate (PtdIns(4,5)P2). Its function is as follows. May be responsible for potassium buffering action of glial cells in the brain. Inward rectifier potassium channels are characterized by a greater tendency to allow potassium to flow into the cell rather than out of it. Their voltage dependence is regulated by the concentration of extracellular potassium; as external potassium is raised, the voltage range of the channel opening shifts to more positive voltages. The inward rectification is mainly due to the blockage of outward current by internal magnesium. Can be blocked by extracellular barium and cesium. In the kidney, together with KCNJ16, mediates basolateral K(+) recycling in distal tubules; this process is critical for Na(+) reabsorption at the tubules. This Homo sapiens (Human) protein is ATP-sensitive inward rectifier potassium channel 10.